Consider the following 209-residue polypeptide: Uracil phosphoribosyltransferase (209 aa).

Residues Arg-79, Arg-104, and 131-139 (DPMLATGGS) contribute to the 5-phospho-alpha-D-ribose 1-diphosphate site. Uracil-binding positions include Ile-194 and 199-201 (GDA). Residue Asp-200 participates in 5-phospho-alpha-D-ribose 1-diphosphate binding.

It belongs to the UPRTase family. The cofactor is Mg(2+).

The catalysed reaction is UMP + diphosphate = 5-phospho-alpha-D-ribose 1-diphosphate + uracil. It functions in the pathway pyrimidine metabolism; UMP biosynthesis via salvage pathway; UMP from uracil: step 1/1. Allosterically activated by GTP. Catalyzes the conversion of uracil and 5-phospho-alpha-D-ribose 1-diphosphate (PRPP) to UMP and diphosphate. This is Uracil phosphoribosyltransferase from Francisella tularensis subsp. novicida (strain U112).